A 432-amino-acid polypeptide reads, in one-letter code: Probable imidazolonepropionase (432 aa).

2 residues coordinate 4-imidazolone-5-propanoate: Y159 and H192. Residue Y159 participates in N-formimidoyl-L-glutamate binding. A Fe(3+)-binding site is contributed by H260. H260 provides a ligand contact to Zn(2+). E263 contributes to the 4-imidazolone-5-propanoate binding site. D334 is a binding site for Fe(3+). Zn(2+) is bound at residue D334. Position 336 (N336) interacts with N-formimidoyl-L-glutamate.

It belongs to the metallo-dependent hydrolases superfamily. HutI family. Zn(2+) serves as cofactor. Requires Fe(3+) as cofactor.

The enzyme catalyses 4-imidazolone-5-propanoate + H2O = N-formimidoyl-L-glutamate. It functions in the pathway amino-acid degradation; L-histidine degradation into L-glutamate; N-formimidoyl-L-glutamate from L-histidine: step 3/3. This Xenopus tropicalis (Western clawed frog) protein is Probable imidazolonepropionase (amdhd1).